We begin with the raw amino-acid sequence, 416 residues long: Lipid II:glycine glycyltransferase (416 aa).

It belongs to the FemABX family.

It localises to the cytoplasm. It carries out the reaction beta-D-GlcNAc-(1-&gt;4)-Mur2Ac(oyl-L-Ala-D-isoglutaminyl-L-Lys-D-Ala-D-Ala)-di-trans,octa-cis-undecaprenyl diphosphate + glycyl-tRNA(Gly) = beta-D-GlcNAc-(1-&gt;4)-Mur2Ac(oyl-L-Ala-D-isoglutaminyl-L-Lys-(N(6)-Gly)-D-Ala-D-Ala)-di-trans,octa-cis-undecaprenyl diphosphate + tRNA(Gly) + H(+). In terms of biological role, catalyzes the incorporation of amino acid(s) into the interchain peptide bridge of peptidoglycan, using aminoacyl-tRNA as amino acid donor. This is Lipid II:glycine glycyltransferase (femX) from Staphylococcus epidermidis (strain ATCC 35984 / DSM 28319 / BCRC 17069 / CCUG 31568 / BM 3577 / RP62A).